Consider the following 549-residue polypeptide: Hydroxylamine reductase (549 aa).

[4Fe-4S] cluster contacts are provided by Cys3, Cys6, Cys15, and Cys21. His244, Glu268, Cys313, Cys405, Cys433, Cys458, Glu492, and Lys494 together coordinate hybrid [4Fe-2O-2S] cluster. Cysteine persulfide is present on Cys405.

It belongs to the HCP family. It depends on [4Fe-4S] cluster as a cofactor. Requires hybrid [4Fe-2O-2S] cluster as cofactor.

It localises to the cytoplasm. It carries out the reaction A + NH4(+) + H2O = hydroxylamine + AH2 + H(+). In terms of biological role, catalyzes the reduction of hydroxylamine to form NH(3) and H(2)O. This Gloeothece citriformis (strain PCC 7424) (Cyanothece sp. (strain PCC 7424)) protein is Hydroxylamine reductase.